Reading from the N-terminus, the 433-residue chain is Probable imidazolonepropionase (433 aa).

Y160 and H193 together coordinate 4-imidazolone-5-propanoate. Y160 provides a ligand contact to N-formimidoyl-L-glutamate. Fe(3+) is bound at residue H261. H261 is a Zn(2+) binding site. E264 contacts 4-imidazolone-5-propanoate. D335 contacts Fe(3+). D335 is a Zn(2+) binding site. Residue N337 coordinates N-formimidoyl-L-glutamate.

The protein belongs to the metallo-dependent hydrolases superfamily. HutI family. Zn(2+) is required as a cofactor. Requires Fe(3+) as cofactor.

The enzyme catalyses 4-imidazolone-5-propanoate + H2O = N-formimidoyl-L-glutamate. Its pathway is amino-acid degradation; L-histidine degradation into L-glutamate; N-formimidoyl-L-glutamate from L-histidine: step 3/3. This Danio rerio (Zebrafish) protein is Probable imidazolonepropionase (amdhd1).